Here is a 151-residue protein sequence, read N- to C-terminus: 3-hydroxyacyl-[acyl-carrier-protein] dehydratase FabZ (151 aa).

His-57 is a catalytic residue.

It belongs to the thioester dehydratase family. FabZ subfamily.

The protein resides in the cytoplasm. It catalyses the reaction a (3R)-hydroxyacyl-[ACP] = a (2E)-enoyl-[ACP] + H2O. Functionally, involved in unsaturated fatty acids biosynthesis. Catalyzes the dehydration of short chain beta-hydroxyacyl-ACPs and long chain saturated and unsaturated beta-hydroxyacyl-ACPs. This is 3-hydroxyacyl-[acyl-carrier-protein] dehydratase FabZ from Prochlorococcus marinus (strain SARG / CCMP1375 / SS120).